The following is a 317-amino-acid chain: Beta-ketoacyl-[acyl-carrier-protein] synthase III (317 aa).

Residues cysteine 112 and histidine 244 contribute to the active site. The tract at residues glutamine 245 to arginine 249 is ACP-binding. The active site involves asparagine 274.

Belongs to the thiolase-like superfamily. FabH family. In terms of assembly, homodimer.

Its subcellular location is the cytoplasm. The enzyme catalyses malonyl-[ACP] + acetyl-CoA + H(+) = 3-oxobutanoyl-[ACP] + CO2 + CoA. It participates in lipid metabolism; fatty acid biosynthesis. Catalyzes the condensation reaction of fatty acid synthesis by the addition to an acyl acceptor of two carbons from malonyl-ACP. Catalyzes the first condensation reaction which initiates fatty acid synthesis and may therefore play a role in governing the total rate of fatty acid production. Possesses both acetoacetyl-ACP synthase and acetyl transacylase activities. Its substrate specificity determines the biosynthesis of branched-chain and/or straight-chain of fatty acids. This chain is Beta-ketoacyl-[acyl-carrier-protein] synthase III, found in Pasteurella multocida (strain Pm70).